A 165-amino-acid chain; its full sequence is Myosin regulatory light chain 2B, cardiac muscle isoform (165 aa).

Alanine 2 is modified (n,N,N-trimethylalanine). EF-hand domains lie at 23–58 (TQIQ…LGRL), 93–128 (DPEE…QEGR), and 129–164 (FSQE…GEEK). Residues aspartate 36, asparagine 38, aspartate 40, and aspartate 47 each coordinate Ca(2+).

Myosin is a hexamer of 2 heavy chains and 4 light chains. In terms of processing, the N-terminus is blocked. N,N,N-trimethylalanine, found in other myosin light chains would not have been detected in the N-terminal tryptic peptide in PubMed:7319048 because it would remain trimethylated and ninhydrin negative after hydrolysis.

The chain is Myosin regulatory light chain 2B, cardiac muscle isoform from Gallus gallus (Chicken).